A 396-amino-acid polypeptide reads, in one-letter code: Alanine racemase (396 aa).

K46 functions as the Proton acceptor; specific for D-alanine in the catalytic mechanism. K46 bears the N6-(pyridoxal phosphate)lysine mark. Residue R145 participates in substrate binding. The Proton acceptor; specific for L-alanine role is filled by Y280. M328 lines the substrate pocket.

This sequence belongs to the alanine racemase family. The cofactor is pyridoxal 5'-phosphate.

It catalyses the reaction L-alanine = D-alanine. It functions in the pathway amino-acid biosynthesis; D-alanine biosynthesis; D-alanine from L-alanine: step 1/1. Catalyzes the interconversion of L-alanine and D-alanine. May also act on other amino acids. The chain is Alanine racemase (alr) from Brucella ovis (strain ATCC 25840 / 63/290 / NCTC 10512).